The chain runs to 556 residues: Cell wall integrity and stress response component 3 (556 aa).

The N-terminal stretch at 1–38 (MERVWFAKLTNKGTIKIGYISFILLSLLCQSLIGLVNA) is a signal peptide. The WSC domain maps to 39-132 (DFNYEGCYSA…SSYMNVYVNA (94 aa)). Residues 39–384 (DFNYEGCYSA…QRLSGGAIAG (346 aa)) are Extracellular-facing. N-linked (GlcNAc...) asparagine glycosylation is present at Asn84. 2 stretches are compositionally biased toward low complexity: residues 142–169 (SSSKEGSSTSYMPSTTSSLSSAQISSTT) and 184–257 (TTVS…STTS). 2 disordered regions span residues 142 to 257 (SSSK…STTS) and 269 to 312 (TLSS…PSTS). 2 N-linked (GlcNAc...) asparagine glycosylation sites follow: Asn367 and Asn370. The chain crosses the membrane as a helical span at residues 385–405 (IVIGVVFGVIFIILILLFLIW). Over 406 to 556 (RRRKSHDQLD…LSSTVSHNRA (151 aa)) the chain is Cytoplasmic. Disordered stretches follow at residues 425–444 (YSFGDEDANPIGPPPSSGTT) and 534–556 (LQVVNPDNPDNPELSSTVSHNRA). Residues 546–556 (ELSSTVSHNRA) are compositionally biased toward polar residues.

The protein resides in the membrane. This is Cell wall integrity and stress response component 3 (WSC3) from Saccharomyces cerevisiae (strain ATCC 204508 / S288c) (Baker's yeast).